Here is a 417-residue protein sequence, read N- to C-terminus: Probable phosphoglycerate kinase (417 aa).

Val-23, Asp-24, Phe-25, Asn-26, Gln-38, Arg-39, Ser-62, His-63, Gly-65, Arg-66, Leu-121, Arg-122, His-169, and Arg-170 together coordinate (2R)-3-phosphoglycerate. Gly-213 provides a ligand contact to ADP. A CDP-binding site is contributed by Gly-213. The AMP site is built by Ala-214 and Lys-215. Position 214 (Ala-214) interacts with ATP. Ala-214 contacts Mg(2+). Residues Ala-217 and Asp-218 each contribute to the Mg(2+) site. Asp-218 serves as a coordination point for CDP. Residue Lys-219 participates in AMP binding. Lys-219 serves as a coordination point for ATP. Gly-237 is an ADP binding site. Gly-237 contributes to the CDP binding site. Positions 238 and 312 each coordinate AMP. Residues Gly-238 and Gly-312 each coordinate ATP. CDP-binding residues include Gly-337, Ala-339, and Phe-342. Phe-342 provides a ligand contact to ADP. Glu-343 lines the AMP pocket. 3 residues coordinate ATP: Glu-343, Asp-374, and Thr-375. Asp-374 lines the Mg(2+) pocket.

This sequence belongs to the phosphoglycerate kinase family. In terms of assembly, monomer. Mg(2+) is required as a cofactor.

It is found in the cytoplasm. It catalyses the reaction (2R)-3-phosphoglycerate + ATP = (2R)-3-phospho-glyceroyl phosphate + ADP. Its pathway is carbohydrate degradation; glycolysis; pyruvate from D-glyceraldehyde 3-phosphate: step 2/5. This is Probable phosphoglycerate kinase (pgk-1) from Caenorhabditis elegans.